The sequence spans 1035 residues: Cell-division control histidine kinase PdhS (1035 aa).

The important for polar localization stretch occupies residues 1–613 (MSGSYPFIDI…HADGSEEPVD (613 aa)). A disordered region spans residues 500-533 (QGLANTRAESETPVSETSSIEPVEPTPPVKTRSE). An interaction with DivK region spans residues 614–1035 (AHLNAIAWRG…VFPPTRVLAD (422 aa)). The PAS domain maps to 659–730 (HVEELKTILD…YLHGLSGNGV (72 aa)). Positions 802–1031 (RISHEIRTPL…VVEIVFPPTR (230 aa)) constitute a Histidine kinase domain. Phosphohistidine; by autocatalysis is present on His-805.

As to quaternary structure, interacts with DivK.

Its subcellular location is the cytoplasm. The catalysed reaction is ATP + protein L-histidine = ADP + protein N-phospho-L-histidine.. In terms of biological role, functions as a polar differentiation marker. Essential protein that, by localizing in the old pole of dividing cells, controls cell division and maturation, probably through control of DivK phosphorylation status and cellular distribution, which in turn regulates CtrA, a transcriptional regulator of the minB operon. The asymmetrical localization of this protein is probably required for cells to enter a new division cycle. The sequence is that of Cell-division control histidine kinase PdhS (pdhS) from Brucella suis biovar 1 (strain 1330).